Reading from the N-terminus, the 130-residue chain is Small ribosomal subunit protein uS9 (130 aa).

The protein belongs to the universal ribosomal protein uS9 family.

The chain is Small ribosomal subunit protein uS9 from Shewanella pealeana (strain ATCC 700345 / ANG-SQ1).